We begin with the raw amino-acid sequence, 318 residues long: 1-phosphofructokinase (318 aa).

ATP is bound by residues S228–G233 and G259–D260. D260 serves as the catalytic Proton acceptor.

Belongs to the carbohydrate kinase PfkB family.

It catalyses the reaction beta-D-fructose 1-phosphate + ATP = beta-D-fructose 1,6-bisphosphate + ADP + H(+). In terms of biological role, catalyzes the ATP-dependent phosphorylation of fructose-l-phosphate to fructose-l,6-bisphosphate. The chain is 1-phosphofructokinase from Xanthomonas campestris pv. campestris (strain ATCC 33913 / DSM 3586 / NCPPB 528 / LMG 568 / P 25).